A 112-amino-acid polypeptide reads, in one-letter code: uncharacterized protein (112 aa).

The chain crosses the membrane as a helical span at residues 89-106 (TLYVLVIVGLTILCFLLV).

It belongs to the IIV-6 466R family.

It is found in the membrane. This is an uncharacterized protein from Aedes vexans (Inland floodwater mosquito).